The following is a 248-amino-acid chain: MTETVLVIGATGHIGVSAVIGALRTKRNVLAVVRNAAAVDKLFRLAGTRDGITTVEADITSEHGLQSVVDKVKNGELPAFQHVYSAVGGVKTTTPLKDLSIEDFRANMSINFDTNFFAYRATIGYLLSQSNPTTYTVITGAIGDVGIWPGPAMSQGALYSLGISAELENRDTNVRFNEMYLAFPVMVDEEAVKEEAAKMGVVKASDFARSYENLLAKDEIKGSRIFIFTPGDIDTLRWESKAFKGPPS.

Residues I14, N35, K41, D58, R120, and V187 each contribute to the NADP(+) site.

It belongs to the short-chain dehydrogenases/reductases (SDR) family.

The protein operates within secondary metabolite biosynthesis. In terms of biological role, short-chain dehydrogenase/reductase; part of the gene cluster that mediates the biosynthesis of iso-A82775C, a enylepoxycyclohexane and biosynthetic precursor of the chloropestolide anticancer natural products. Within the cluster, the prenyltransferase iacE prenylates siccayne to generate pestalodiol E, using dimethylallyl diphosphate (DMAPP) as cosubstrate. The probable oxidoreductase iacF is then involved in the epoxidation of pestalodiol F to pestalodiol F, which is further converted to pestalofone A by the short-chain dehydrogenase/reductase iacG. Iso-A82775C is subsequently generated from pestalofone A by the short-chain dehydrogenase/reductase iacC. Iso-A82775C is further condensed with maldoxin via a Diels-Alder reaction to produce the anticancer natural products chloropestolides A to E. The polypeptide is Short-chain dehydrogenase/reductase iacG (Pestalotiopsis fici (strain W106-1 / CGMCC3.15140)).